The following is a 162-amino-acid chain: ATP synthase subunit b (162 aa).

Residues 8-28 (LTGIIQLLNFLILLFVLYKFL) form a helical membrane-spanning segment.

Belongs to the ATPase B chain family. In terms of assembly, F-type ATPases have 2 components, F(1) - the catalytic core - and F(0) - the membrane proton channel. F(1) has five subunits: alpha(3), beta(3), gamma(1), delta(1), epsilon(1). F(0) has three main subunits: a(1), b(2) and c(10-14). The alpha and beta chains form an alternating ring which encloses part of the gamma chain. F(1) is attached to F(0) by a central stalk formed by the gamma and epsilon chains, while a peripheral stalk is formed by the delta and b chains.

The protein localises to the cell inner membrane. Its function is as follows. F(1)F(0) ATP synthase produces ATP from ADP in the presence of a proton or sodium gradient. F-type ATPases consist of two structural domains, F(1) containing the extramembraneous catalytic core and F(0) containing the membrane proton channel, linked together by a central stalk and a peripheral stalk. During catalysis, ATP synthesis in the catalytic domain of F(1) is coupled via a rotary mechanism of the central stalk subunits to proton translocation. Functionally, component of the F(0) channel, it forms part of the peripheral stalk, linking F(1) to F(0). This Pseudothermotoga lettingae (strain ATCC BAA-301 / DSM 14385 / NBRC 107922 / TMO) (Thermotoga lettingae) protein is ATP synthase subunit b.